The sequence spans 205 residues: Inactive ribonuclease-like protein 9 (205 aa).

Positions 1 to 24 (MMLITTHSLPLLLLLLQLWQPLQF) are cleaved as a signal peptide. 3 disulfides stabilise this stretch: C97/C152, C115/C167, and C122/C129. Residues N130 and N142 are each glycosylated (N-linked (GlcNAc...) asparagine).

This sequence belongs to the pancreatic ribonuclease family.

The protein resides in the secreted. Its function is as follows. Does not exhibit any ribonuclease activity. The chain is Inactive ribonuclease-like protein 9 (RNASE9) from Cebus albifrons (White-fronted capuchin).